Reading from the N-terminus, the 504-residue chain is Probable periplasmic serine endoprotease DegP-like (504 aa).

A signal peptide spans 1-26 (MLKTTTVAGLAAVLLTTGLPAEVAQS). A compositionally biased stretch (basic and acidic residues) spans 102 to 118 (RADRWRDRRGPRGEGRL). The segment at 102-122 (RADRWRDRRGPRGEGRLRPRA) is disordered. A serine protease region spans residues 113–286 (RGEGRLRPRA…PASVAKDVVD (174 aa)). Catalysis depends on charge relay system residues histidine 140, aspartate 170, and serine 244. Substrate-binding positions include 242-244 (GNS) and 299-303 (LGVQI). PDZ domains lie at 287–378 (SLIK…LWRS) and 401–491 (ATGE…IEAQ). Disordered stretches follow at residues 389 to 411 (GTLPSDAKEPAPATGEAQPDEGQ) and 428 to 447 (EDGKGVTIASVDPDSDAGDR).

The protein belongs to the peptidase S1C family.

The protein localises to the periplasm. It catalyses the reaction Acts on substrates that are at least partially unfolded. The cleavage site P1 residue is normally between a pair of hydrophobic residues, such as Val-|-Val.. Might be efficient in the degradation of transiently denatured and unfolded proteins which accumulate in the periplasm following stress conditions. In Rhizobium meliloti (strain 1021) (Ensifer meliloti), this protein is Probable periplasmic serine endoprotease DegP-like (degP1).